Reading from the N-terminus, the 318-residue chain is Nucleotide-binding protein Lcho_3490 (318 aa).

Residue 35–42 (GISGGGKS) participates in ATP binding. 84–87 (DVRN) contributes to the GTP binding site.

The protein belongs to the RapZ-like family.

Its function is as follows. Displays ATPase and GTPase activities. This is Nucleotide-binding protein Lcho_3490 from Leptothrix cholodnii (strain ATCC 51168 / LMG 8142 / SP-6) (Leptothrix discophora (strain SP-6)).